A 148-amino-acid chain; its full sequence is Deoxyuridine 5'-triphosphate nucleotidohydrolase (148 aa).

Residues 68–70 (RSG), Asn-81, 85–87 (TID), and Lys-95 contribute to the substrate site.

The protein belongs to the dUTPase family. Requires Mg(2+) as cofactor.

The catalysed reaction is dUTP + H2O = dUMP + diphosphate + H(+). The protein operates within pyrimidine metabolism; dUMP biosynthesis; dUMP from dCTP (dUTP route): step 2/2. This enzyme is involved in nucleotide metabolism: it produces dUMP, the immediate precursor of thymidine nucleotides and it decreases the intracellular concentration of dUTP so that uracil cannot be incorporated into DNA. This chain is Deoxyuridine 5'-triphosphate nucleotidohydrolase, found in Rickettsia peacockii (strain Rustic).